The chain runs to 975 residues: Nesprin-3 (975 aa).

Over 1 to 925 (MTQQPQDDFD…LGSLFRRACC (925 aa)) the chain is Cytoplasmic. A Spectrin 1 repeat occupies 220–325 (REHEEYQAGV…WEEEEERLRG (106 aa)). A coiled-coil region spans residues 617–645 (NHQHKMDQLSSDFQALQRSLEDLVDRCRQ). Residues 647–740 (VQEHCTFSHQ…RELAESWRAL (94 aa)) form a Spectrin 2 repeat. The region spanning 917–975 (GSLFRRACCVALPLQLLLLLFLLLLFLLPIREEDRSCTLANNFARSFTLMLRYNGPPPT) is the KASH domain. The chain crosses the membrane as a helical; Anchor for type IV membrane protein span at residues 926 to 946 (VALPLQLLLLLFLLLLFLLPI). At 947-975 (REEDRSCTLANNFARSFTLMLRYNGPPPT) the chain is on the perinuclear space side.

Belongs to the nesprin family. In terms of assembly, core component of LINC complexes which are composed of inner nuclear membrane SUN domain-containing proteins coupled to outer nuclear membrane KASH domain-containing nesprins. SUN and KASH domain-containing proteins seem to bind each other promiscuously; however, differentially expression of LINC complex constituents can give rise to specific assemblies. Interacts with SUN1 and SUN2; probably forming respective LINC complexes. Interacts with PLEC (via actin-binding domain). Interacts with DST. Interacts with SYNE1 via spectrin repeats. Interacts (via KASH domain) with TOR1A (ATP-bound); the interaction is required for SYNE3 nuclear envelope localization. Post-translationally, the disulfid bond with SUN1 or SUN2 is required for stability of the respective LINC complex under tensile forces. In terms of tissue distribution, expressed in aortic endothelial cells (at protein level).

Its subcellular location is the nucleus outer membrane. The protein resides in the nucleus envelope. It localises to the rough endoplasmic reticulum. Functionally, as a component of the LINC (LInker of Nucleoskeleton and Cytoskeleton) complex involved in the connection between the nuclear lamina and the cytoskeleton. The nucleocytoplasmic interactions established by the LINC complex play an important role in the transmission of mechanical forces across the nuclear envelope and in nuclear movement and positioning. Probable anchoring protein which tethers the nucleus to the cytoskeleton by binding PLEC which can associate with the intermediate filament system. Plays a role in the regulation of aortic epithelial cell morphology, and is required for flow-induced centrosome polarization and directional migration in aortic endothelial cells. The chain is Nesprin-3 from Homo sapiens (Human).